A 111-amino-acid chain; its full sequence is Wound-induced proteinase inhibitor 1 (111 aa).

The first 23 residues, Met1 to Ala23, serve as a signal peptide directing secretion. A propeptide spanning residues Arg24 to Leu36 is cleaved from the precursor.

This sequence belongs to the protease inhibitor I13 (potato type I serine protease inhibitor) family.

The protein resides in the secreted. This Solanum peruvianum (Peruvian tomato) protein is Wound-induced proteinase inhibitor 1.